Consider the following 347-residue polypeptide: Quinolinate synthase (347 aa).

Residues histidine 47 and serine 68 each coordinate iminosuccinate. Cysteine 113 lines the [4Fe-4S] cluster pocket. Iminosuccinate contacts are provided by residues 139-141 (YAN) and serine 156. Cysteine 200 is a binding site for [4Fe-4S] cluster. Iminosuccinate contacts are provided by residues 226–228 (HPE) and threonine 243. A [4Fe-4S] cluster-binding site is contributed by cysteine 297.

This sequence belongs to the quinolinate synthase family. Type 1 subfamily. It depends on [4Fe-4S] cluster as a cofactor.

Its subcellular location is the cytoplasm. It carries out the reaction iminosuccinate + dihydroxyacetone phosphate = quinolinate + phosphate + 2 H2O + H(+). It functions in the pathway cofactor biosynthesis; NAD(+) biosynthesis; quinolinate from iminoaspartate: step 1/1. Functionally, catalyzes the condensation of iminoaspartate with dihydroxyacetone phosphate to form quinolinate. The protein is Quinolinate synthase of Enterobacter sp. (strain 638).